Consider the following 376-residue polypeptide: Erythronate-4-phosphate dehydrogenase (376 aa).

Residues S45 and T67 each coordinate substrate. D147 is an NAD(+) binding site. R209 is an active-site residue. D233 contacts NAD(+). E238 is a catalytic residue. The active-site Proton donor is H255. NAD(+) is bound at residue G258. Residue Y259 coordinates substrate.

Belongs to the D-isomer specific 2-hydroxyacid dehydrogenase family. PdxB subfamily. Homodimer.

Its subcellular location is the cytoplasm. It catalyses the reaction 4-phospho-D-erythronate + NAD(+) = (R)-3-hydroxy-2-oxo-4-phosphooxybutanoate + NADH + H(+). The protein operates within cofactor biosynthesis; pyridoxine 5'-phosphate biosynthesis; pyridoxine 5'-phosphate from D-erythrose 4-phosphate: step 2/5. Catalyzes the oxidation of erythronate-4-phosphate to 3-hydroxy-2-oxo-4-phosphonooxybutanoate. This is Erythronate-4-phosphate dehydrogenase from Shewanella halifaxensis (strain HAW-EB4).